The chain runs to 1015 residues: SGGFDFSFLPQPPQEKGDGKGVGLGPGPMGLMGPRGPPGASFQGPAGEPGEPGQTGPAGARGPAGPPGKAGEDGHPGKPGRPGERGVVGPQGARGFPGTPGLPGFKGIRGHNGLDGLKGQAGAPGVKTGARGLPGERGRVGAPGPAGARGSDGSVGPVGPAGPIGSAGPPGFPGAPGPKGELGPVGNPGPAGPAGPRGEQGLPGVSGPVGPPGKGAAGLPGVAGAPGLPGPRGIPGPVGAVGATGARGLVGEPGPAGSKGESGNKGEPGSAGPQGPPGPSGEEGKRGPSGESGSTGPTGPPGLRGGPGSRGLPGADGRAGVMGPAGSRGASGPAGVRGPSGDTGRPGEPGLMGRGLPGSPGNTGPAGKEGPVGLPGIDGRPGPVGPAGPRGEAGNIGFPGPKGPTGDPGKGEKGHAGLAGNRGAPGPDGNNGAQGPPGLQGVQGGKGEQGPAGPPGFQGLPGPSGTTGEAGKPGERGIHGEFGLPGPAGPRGERGPPGESGAAGPVGPIGSRGPSGPPGPDGNKGEPGVVGAPGTAGPGSGGLPGERGAAGIPGGKGEKGETGLRGEVGTTGRDGARGAPGAVGAPGPAGATGDRGEAGAAGPAGPAGPRGSPGERGEVGPAGPNGFAGPAGAAGQPGAKGERGTKGPKGENGIVGPTGPVGAAGPSGPNGAPGPAGGRGDGGPPGLTGFPGAAGRTGPPGPSGITGPPGPPGAAGKEGLRGPRGDQGPVGRTGETGAGGPPGFAGEKGPSGEPGTAGPPGTAGPQGLLGAPGILGLPGSRGERGLPGVAGAVGEPGPLGISGPPGARGPPGAVGPGVNGAPGEAGRSDGPPGRDGLPGHKGERGYAGNAGPVGAAGAPGPHGTVGPAGKHGNRGEPGPAGSVGPVGAVGPRGPSGPQGVRGDKGEAGDKGPRGLPGLKGHNGLQGLPGLAGQHGDQGSPGPVGPAGPRGPAGPSGPAGKDGRTGHPGAVGPAGVRGSQGSQGPSGPAGPPGPPGPPGASGGGYDFGYEGDFYRA.

A disordered region spans residues 1-1015 (SGGFDFSFLP…FGYEGDFYRA (1015 aa)). A 4-hydroxyproline mark is found at P10 and P13. The segment covering 20 to 30 (KGVGLGPGPMG) has biased composition (gly residues). P38 is subject to 4-hydroxyproline. Residues 43–69 (QGPAGEPGEPGQTGPAGARGPAGPPGK) are compositionally biased toward low complexity. Over residues 70–84 (AGEDGHPGKPGRPGE) the composition is skewed to basic and acidic residues. K106 bears the 5-hydroxylysine; alternate mark. An O-linked (Gal...) hydroxylysine; alternate glycan is attached at K106. 3 stretches are compositionally biased toward low complexity: residues 140–169 (VGAPGPAGARGSDGSVGPVGPAGPIGSAGP), 194–208 (AGPRGEQGLPGVSGP), and 235–250 (PGPVGAVGATGARGLV). The span at 302 to 311 (GLRGGPGSRG) shows a compositional bias: gly residues. Low complexity predominate over residues 324 to 340 (PAGSRGASGPAGVRGPS). 4-hydroxyproline occurs at positions 346 and 349. The segment covering 441 to 450 (GVQGGKGEQG) has biased composition (gly residues). The segment covering 497–514 (PGESGAAGPVGPIGSRGP) has biased composition (low complexity). The span at 534–545 (GTAGPGSGGLPG) shows a compositional bias: gly residues. Low complexity-rich tracts occupy residues 568 to 612 (VGTT…PRGS) and 619 to 639 (VGPAGPNGFAGPAGAAGQPGA). Positions 640 to 649 (KGERGTKGPK) are enriched in basic and acidic residues. Residues 657 to 670 (PTGPVGAAGPSGPN) are compositionally biased toward low complexity. A compositionally biased stretch (gly residues) spans 674-686 (GPAGGRGDGGPPG). Residues 687-697 (LTGFPGAAGRT) are compositionally biased toward low complexity. The segment covering 734–743 (GETGAGGPPG) has biased composition (gly residues). Low complexity-rich tracts occupy residues 751–778 (SGEPGTAGPPGTAGPQGLLGAPGILGLP), 786–799 (LPGVAGAVGEPGPL), 846–868 (YAGNAGPVGAAGAPGPHGTVGPA), and 877–897 (PGPAGSVGPVGAVGPRGPSGP). Positions 901 to 912 (RGDKGEAGDKGP) are enriched in basic and acidic residues. Pro residues predominate over residues 987-997 (PAGPPGPPGPP).

Belongs to the fibrillar collagen family. Trimers of one alpha 2(I) and two alpha 1(I) chains. Interacts (via C-terminus) with TMEM131 (via PapD-L domain); the interaction is direct and is involved in assembly and TRAPPIII ER-to-Golgi transport complex-dependent secretion of collagen. Post-translationally, prolines at the third position of the tripeptide repeating unit (G-X-Y) are hydroxylated in some or all of the chains. Expressed in bones.

It localises to the secreted. The protein localises to the extracellular space. It is found in the extracellular matrix. Functionally, type I collagen is a member of group I collagen (fibrillar forming collagen). This Doedicurus sp. (South American giant glyptodont) protein is Collagen alpha-2(I) chain.